The following is a 462-amino-acid chain: Glutamate--tRNA ligase 2 (462 aa).

The 'HIGH' region motif lies at 8–18; that stretch reads PSPTGLLHVGG. The short motif at 227-231 is the 'KMSKS' region element; it reads PLSKR. Lysine 230 contacts ATP.

Belongs to the class-I aminoacyl-tRNA synthetase family. Glutamate--tRNA ligase type 1 subfamily. Monomer.

Its subcellular location is the cytoplasm. It carries out the reaction tRNA(Glu) + L-glutamate + ATP = L-glutamyl-tRNA(Glu) + AMP + diphosphate. Functionally, catalyzes the attachment of glutamate to tRNA(Glu) in a two-step reaction: glutamate is first activated by ATP to form Glu-AMP and then transferred to the acceptor end of tRNA(Glu). In Thermosipho melanesiensis (strain DSM 12029 / CIP 104789 / BI429), this protein is Glutamate--tRNA ligase 2.